The chain runs to 123 residues: Large ribosomal subunit protein uL24 (123 aa).

This sequence belongs to the universal ribosomal protein uL24 family. As to quaternary structure, part of the 50S ribosomal subunit.

In terms of biological role, one of two assembly initiator proteins, it binds directly to the 5'-end of the 23S rRNA, where it nucleates assembly of the 50S subunit. Its function is as follows. One of the proteins that surrounds the polypeptide exit tunnel on the outside of the subunit. The chain is Large ribosomal subunit protein uL24 from Kineococcus radiotolerans (strain ATCC BAA-149 / DSM 14245 / SRS30216).